Reading from the N-terminus, the 358-residue chain is NADH-quinone oxidoreductase subunit H (358 aa).

Transmembrane regions (helical) follow at residues 20–40, 95–115, 128–148, 168–188, 206–226, 253–273, 290–310, and 334–354; these read ITVG…IPLI, ALFY…WAVI, IGLL…IIAG, ISYE…SGSM, VFSW…ISAV, GFAF…ISAL, WGFI…AVLY, and VLIP…ISPL.

Belongs to the complex I subunit 1 family. NDH-1 is composed of 14 different subunits. Subunits NuoA, H, J, K, L, M, N constitute the membrane sector of the complex.

The protein resides in the cell inner membrane. It catalyses the reaction a quinone + NADH + 5 H(+)(in) = a quinol + NAD(+) + 4 H(+)(out). In terms of biological role, NDH-1 shuttles electrons from NADH, via FMN and iron-sulfur (Fe-S) centers, to quinones in the respiratory chain. The immediate electron acceptor for the enzyme in this species is believed to be ubiquinone. Couples the redox reaction to proton translocation (for every two electrons transferred, four hydrogen ions are translocated across the cytoplasmic membrane), and thus conserves the redox energy in a proton gradient. This subunit may bind ubiquinone. This Neisseria meningitidis serogroup C (strain 053442) protein is NADH-quinone oxidoreductase subunit H.